Here is a 517-residue protein sequence, read N- to C-terminus: Crotonobetaine/carnitine--CoA ligase (517 aa).

Belongs to the ATP-dependent AMP-binding enzyme family.

It catalyses the reaction 4-(trimethylamino)butanoate + ATP + CoA = 4-(trimethylamino)butanoyl-CoA + AMP + diphosphate. The catalysed reaction is crotonobetaine + ATP + CoA = crotonobetainyl-CoA + AMP + diphosphate. The enzyme catalyses (R)-carnitine + ATP + CoA = (R)-carnitinyl-CoA + AMP + diphosphate. It functions in the pathway amine and polyamine metabolism; carnitine metabolism. In terms of biological role, catalyzes the transfer of CoA to carnitine, generating the initial carnitinyl-CoA needed for the CaiB reaction cycle. Also has activity toward crotonobetaine and gamma-butyrobetaine. The protein is Crotonobetaine/carnitine--CoA ligase of Salmonella arizonae (strain ATCC BAA-731 / CDC346-86 / RSK2980).